The primary structure comprises 121 residues: Ragulator complex protein LAMTOR4 homolog (121 aa).

Residues 91–121 (TQNGATTSSSSSTSYNDAAEGNNISSSTVLA) are disordered. The segment covering 112–121 (NNISSSTVLA) has biased composition (polar residues).

This sequence belongs to the LAMTOR4 family. In terms of assembly, part of the Ragulator complex.

The protein localises to the lysosome. Regulator of the TOR pathway, a signaling cascade that promotes cell growth in response to growth factors, energy levels, and amino acids. As part of the Ragulator complex, may activate the TOR signaling cascade in response to amino acids. The polypeptide is Ragulator complex protein LAMTOR4 homolog (Drosophila pseudoobscura pseudoobscura (Fruit fly)).